Reading from the N-terminus, the 220-residue chain is UPF0758 protein CKO_05095 (220 aa).

An MPN domain is found at 98-220; sequence ALLSPEMTRE…YVSFAERGWI (123 aa). Zn(2+) contacts are provided by His-169, His-171, and Asp-182. The short motif at 169 to 182 is the JAMM motif element; the sequence is HNHPSGCAEPSKAD.

This sequence belongs to the UPF0758 family. YicR subfamily.

This chain is UPF0758 protein CKO_05095, found in Citrobacter koseri (strain ATCC BAA-895 / CDC 4225-83 / SGSC4696).